Consider the following 190-residue polypeptide: MATSEAPINLTNQFLIAMPGMADPTFSGSVVYLCEHNERGALGLVINRPIDIDMATLFDKIDLKLEIQPVAHQPVYFGGPVQTERGFVLHDPVGIYVSSLAVPGGLEMTTSKDVLEAVANGSGPHRFLLTLGYAGWGAGQLEDELSRNGWLTVQADPEIIFSVPPEERFAAAIRLLGIDISMLSGDAGHA.

The protein belongs to the UPF0301 (AlgH) family.

This Cupriavidus metallidurans (strain ATCC 43123 / DSM 2839 / NBRC 102507 / CH34) (Ralstonia metallidurans) protein is UPF0301 protein Rmet_2743.